Here is a 960-residue protein sequence, read N- to C-terminus: Gamma-aminobutyric acid type B receptor subunit 1 (960 aa).

Residues 1–19 (MLLLLLVPLFLRPLGAGGA) form the signal peptide. At 20–590 (QTPNVTSEGC…KTFRFLSQKL (571 aa)) the chain is on the extracellular side. 2 N-linked (GlcNAc...) asparagine glycosylation sites follow: Asn-23 and Asn-83. Sushi domains are found at residues 29-95 (CQII…PSRC) and 97-158 (RICS…HCQV). Disulfide bonds link Cys-99–Cys-144, Cys-130–Cys-156, and Cys-219–Cys-245. Residues Ser-246, Ser-269, His-286, and Tyr-366 each contribute to the 4-aminobutanoate site. A disulfide bridge links Cys-375 with Cys-409. N-linked (GlcNAc...) asparagine glycosylation is found at Asn-408 and Asn-439. Glu-465 contacts 4-aminobutanoate. N-linked (GlcNAc...) asparagine glycosylation is found at Asn-481, Asn-501, and Asn-513. Residues 591 to 611 (FISVSVLSSLGIVLAVVCLSF) form a helical membrane-spanning segment. Residues 612–630 (NIYNSHVRYIQNSQPNLNN) lie on the Cytoplasmic side of the membrane. Residues 631–651 (LTAVGCSLALAAVFPLGLDGY) traverse the membrane as a helical segment. The Extracellular segment spans residues 652–666 (HIGRSQFPFVCQARL). Residues 667–687 (WLLGLGFSLGYGSMFTKIWWV) form a helical membrane-spanning segment. The Cytoplasmic segment spans residues 688–709 (HTVFTKKEEKKEWRKTLEPWKL). Residues 710 to 730 (YATVGLLVGMDILTLAIWQIV) traverse the membrane as a helical segment. The Extracellular segment spans residues 731 to 767 (DPLHRTIETFAKEEPKEDIDVSILPQLEHCSSKKMNT). Residues 768 to 788 (WLGIFYGYKGLLLLLGIFLAY) form a helical membrane-spanning segment. Topologically, residues 789-803 (ETKSVSTEKINDHRA) are cytoplasmic. Residues 804–824 (VGMAIYNVAVLCLITAPVTMI) form a helical membrane-spanning segment. Residues 825–832 (LSSQQDAA) are Extracellular-facing. Residues 833 to 853 (FAFASLAIVFSSYITLVVLFV) traverse the membrane as a helical segment. The Cytoplasmic segment spans residues 854-960 (PKMRRLITRG…DGSRVHLLYK (107 aa)). Disordered stretches follow at residues 866–891 (QSEA…RLLE) and 908–960 (VSEL…LLYK). The span at 867–879 (SEAQDTMKTGSST) shows a compositional bias: polar residues. Residues 868–924 (EAQDTMKTGSSTNNNEEEKSRLLEKENRELEKIIAEKEERVSELRHQLQSRQQIRSR) are a coiled coil. The residue at position 872 (Thr-872) is a Phosphothreonine. The interval 887 to 915 (SRLLEKENRELEKIIAEKEERVSELRHQL) is interaction with ATF4. At Thr-929 the chain carries Phosphothreonine.

It belongs to the G-protein coupled receptor 3 family. GABA-B receptor subfamily. In terms of assembly, heterodimer of GABBR1 and GABBR2. Homodimers may form, but are inactive. Interacts (via C-terminus) with ATF4 (via leucine zipper domain). Interacts with JAKMIP1. Interacts with KCTD8, KCTD12, KCTD12B and KCTD16; this interaction determines the pharmacology and kinetics of the receptor response, the KCTD proteins markedly accelerating the GABA-B response, although to different extents. Expressed in neuronal tissue including cortex, cerebellum and spinal cord. Not detected in non-neuronal tissues including heart, liver, spleen and kidney.

Its subcellular location is the cell membrane. It localises to the postsynaptic cell membrane. The protein resides in the cell projection. It is found in the dendrite. Its function is as follows. Component of a heterodimeric G-protein coupled receptor for GABA, formed by GABBR1 and GABBR2. Within the heterodimeric GABA receptor, only GABBR1 seems to bind agonists, while GABBR2 mediates coupling to G proteins. Ligand binding causes a conformation change that triggers signaling via guanine nucleotide-binding proteins (G proteins) and modulates the activity of down-stream effectors, such as adenylate cyclase. Signaling inhibits adenylate cyclase, stimulates phospholipase A2, activates potassium channels, inactivates voltage-dependent calcium-channels and modulates inositol phospholipid hydrolysis. Calcium is required for high affinity binding to GABA. Plays a critical role in the fine-tuning of inhibitory synaptic transmission. Pre-synaptic GABA receptor inhibits neurotransmitter release by down-regulating high-voltage activated calcium channels, whereas postsynaptic GABA receptor decreases neuronal excitability by activating a prominent inwardly rectifying potassium (Kir) conductance that underlies the late inhibitory postsynaptic potentials. Not only implicated in synaptic inhibition but also in hippocampal long-term potentiation, slow wave sleep, muscle relaxation and antinociception. The polypeptide is Gamma-aminobutyric acid type B receptor subunit 1 (Gabbr1) (Mus musculus (Mouse)).